The primary structure comprises 167 residues: MAKLEAQQKDDLQEKLIAVNRVSKVVKGGRIFSFTALTVVGDGNGKVGYGYGKAREVPAAIQKAMEKARRNMVTVELNAGTLHHPVKGRHTGSRVYMQPASQGTGIIAGGAMRAVLEVAGVHNVLSKAYGSTNPINIVRATVDALVHMKSPSQIAAKRGLNVDEIRG.

Positions 12 to 75 (LQEKLIAVNR…EKARRNMVTV (64 aa)) constitute an S5 DRBM domain.

It belongs to the universal ribosomal protein uS5 family. Part of the 30S ribosomal subunit. Contacts proteins S4 and S8.

Its function is as follows. With S4 and S12 plays an important role in translational accuracy. Functionally, located at the back of the 30S subunit body where it stabilizes the conformation of the head with respect to the body. In Shewanella oneidensis (strain ATCC 700550 / JCM 31522 / CIP 106686 / LMG 19005 / NCIMB 14063 / MR-1), this protein is Small ribosomal subunit protein uS5.